The sequence spans 431 residues: Serine--tRNA ligase (431 aa).

An L-serine-binding site is contributed by 235–237; the sequence is TAE. Residues 266 to 268 and valine 282 contribute to the ATP site; that span reads RRE. Glutamate 289 is an L-serine binding site. An ATP-binding site is contributed by 353–356; it reads EASS. Serine 389 is a binding site for L-serine.

Belongs to the class-II aminoacyl-tRNA synthetase family. Type-1 seryl-tRNA synthetase subfamily. As to quaternary structure, homodimer. The tRNA molecule binds across the dimer.

Its subcellular location is the cytoplasm. The enzyme catalyses tRNA(Ser) + L-serine + ATP = L-seryl-tRNA(Ser) + AMP + diphosphate + H(+). It carries out the reaction tRNA(Sec) + L-serine + ATP = L-seryl-tRNA(Sec) + AMP + diphosphate + H(+). Its pathway is aminoacyl-tRNA biosynthesis; selenocysteinyl-tRNA(Sec) biosynthesis; L-seryl-tRNA(Sec) from L-serine and tRNA(Sec): step 1/1. Catalyzes the attachment of serine to tRNA(Ser). Is also able to aminoacylate tRNA(Sec) with serine, to form the misacylated tRNA L-seryl-tRNA(Sec), which will be further converted into selenocysteinyl-tRNA(Sec). The protein is Serine--tRNA ligase of Pelodictyon phaeoclathratiforme (strain DSM 5477 / BU-1).